A 403-amino-acid chain; its full sequence is Phosphoglycerate kinase (403 aa).

Substrate contacts are provided by residues 21-23, Arg-36, 59-62, Arg-119, and Arg-154; these read DFN and HLGR. ATP is bound by residues Lys-207, Gly-299, Glu-330, and 357–360; that span reads GGDA.

The protein belongs to the phosphoglycerate kinase family. In terms of assembly, monomer.

The protein resides in the cytoplasm. The catalysed reaction is (2R)-3-phosphoglycerate + ATP = (2R)-3-phospho-glyceroyl phosphate + ADP. Its pathway is carbohydrate degradation; glycolysis; pyruvate from D-glyceraldehyde 3-phosphate: step 2/5. The sequence is that of Phosphoglycerate kinase from Chlamydia abortus (strain DSM 27085 / S26/3) (Chlamydophila abortus).